The primary structure comprises 468 residues: Uronate isomerase (468 aa).

The protein belongs to the metallo-dependent hydrolases superfamily. Uronate isomerase family.

It catalyses the reaction D-glucuronate = D-fructuronate. The enzyme catalyses aldehydo-D-galacturonate = keto-D-tagaturonate. Its pathway is carbohydrate metabolism; pentose and glucuronate interconversion. The chain is Uronate isomerase from Marinomonas sp. (strain MWYL1).